The primary structure comprises 162 residues: NADH-quinone oxidoreductase subunit I (162 aa).

2 consecutive 4Fe-4S ferredoxin-type domains span residues 52–82 (LRRY…IEAG) and 93–122 (VRYD…EGPN). Residues C62, C65, C68, C72, C102, C105, C108, and C112 each coordinate [4Fe-4S] cluster.

The protein belongs to the complex I 23 kDa subunit family. As to quaternary structure, NDH-1 is composed of 14 different subunits. Subunits NuoA, H, J, K, L, M, N constitute the membrane sector of the complex. The cofactor is [4Fe-4S] cluster.

The protein localises to the cell inner membrane. It carries out the reaction a quinone + NADH + 5 H(+)(in) = a quinol + NAD(+) + 4 H(+)(out). Functionally, NDH-1 shuttles electrons from NADH, via FMN and iron-sulfur (Fe-S) centers, to quinones in the respiratory chain. The immediate electron acceptor for the enzyme in this species is believed to be ubiquinone. Couples the redox reaction to proton translocation (for every two electrons transferred, four hydrogen ions are translocated across the cytoplasmic membrane), and thus conserves the redox energy in a proton gradient. The protein is NADH-quinone oxidoreductase subunit I of Nitrobacter hamburgensis (strain DSM 10229 / NCIMB 13809 / X14).